Consider the following 863-residue polypeptide: Receptor-like protein Cf-9 (863 aa).

An N-terminal signal peptide occupies residues 1 to 21 (MDCVKLVFLMLYTFLCQLALS). Over 22-812 (SSLPHLCPED…EEDSPMISWQ (791 aa)) the chain is Extracellular. Residues 24 to 91 (LPHLCPEDQA…GVHCDETTGQ (68 aa)) form an N-cap region. N-linked (GlcNAc...) asparagine glycans are attached at residues N48, N72, N109, N127, N142, N191, N204, and N212. Residues 92-115 (VIALDLRCSQLQGKFHSNSSLFQL) form an LRR 1; degenerate repeat. LRR repeat units follow at residues 116–139 (SNLKRLDLSFNNFTGSLISPKFGE) and 141–164 (SNLTHLDLSHSSFTGLIPSEICHL). An LRR 4; degenerate repeat occupies 165–191 (SKLHVLRICDQYGLSLVPYNFELLLKN). LRR repeat units lie at residues 192–214 (LTQLRELNLESVNISSTIPSNFS), 215–238 (SHLTTLQLSGTELHGILPERVFHL), 241–263 (LQSLHLSVNPQLTVRFPTTKWNS), 265–287 (ASLMTLYVDSVNIADRIPKSFSH), 288–312 (LTSLHELYMGRCNLSGPIPKPLWNL), 314–335 (NIVFLHLGDNHLEGPISHFTIF), 336–358 (EKLKRLSLVNNNFDGGLEFLSFN), 359–382 (TQLERLDLSSNSLTGPIPSNISGL), 383–406 (QNLECLYLSSNHLNGSIPSWIFSL), 408–428 (SLVELDLSNNTFSGKIQEFKS), 429–452 (KTLSAVTLKQNKLKGRIPNSLLNQ), 454–476 (NLQLLLLSHNNISGHISSAICNL), 477–500 (KTLILLDLGSNNLEGTIPQCVVER), 502–524 (EYLSHLDLSKNRLSGTINTTFSV), 525–549 (GNILRVISLHGNKLTGKVPRSMINC), 551–572 (YLTLLDLGNNMLNDTFPNWLGY), 573–597 (LFQLKILSLRSNKLHGPIKSSGNTN), 599–623 (FMGLQILDLSSNGFSGNLPERILGN), 667–690 (LDSNMIINLSKNRFEGHIPSIIGD), 691–714 (LVGLRTLNLSHNVLEGHIPASFQN), 715–739 (LSVLESLDLSSNKISGEIPQQLASL), and 741–759 (FLEVLNLSHNHLVGCIPKG). N262 carries an N-linked (GlcNAc...) asparagine glycan. 2 N-linked (GlcNAc...) asparagine glycosylation sites follow: N300 and N311. N-linked (GlcNAc...) asparagine glycans are attached at residues N378, N396, and N416. An N-linked (GlcNAc...) asparagine glycan is attached at N464. A glycan (N-linked (GlcNAc...) asparagine) is linked at N519. N563 carries N-linked (GlcNAc...) asparagine glycosylation. N698 and N714 each carry an N-linked (GlcNAc...) asparagine glycan. 2 N-linked (GlcNAc...) asparagine glycosylation sites follow: N746 and N767. The interval 760 to 812 (KQFDSFGNTSYQGNDGLRGFPLSKLCGGEDQVTTPAELDQEEEEEDSPMISWQ) is C-cap/acidic domain. A helical membrane pass occupies residues 813–833 (GVLVGYGCGLVIGLSVIYIMW). The Cytoplasmic segment spans residues 834–863 (STQYPAWFSRMDLKLEHIITTKMKKHKKRY).

It belongs to the RLP family. As to quaternary structure, interacts with thioredoxin-like protein CITRX.

The protein resides in the cell membrane. Involved in plant defense. Confers resistance to the fungal pathogen C.fulvum through recognition of the AVR9 elicitor protein. The sequence is that of Receptor-like protein Cf-9 from Solanum pimpinellifolium (Currant tomato).